We begin with the raw amino-acid sequence, 554 residues long: MSNNSFTNFKLATELPAWSKLQKIYESQGKTLSVKQEFQKDAKRFEKLNKTFTNYDGSKILFDYSKNLVNDEIIAALIELAKEANVTGLRDAMFKGEHINSTEDRAVYHVALRNRANKPMYVDGVNVAPEVDSVLKHMKEFSEQVRSGEWKGYTGKKITDVVNIGIGGSDLGPVMVTEALKHYAGVLDVHFVSNIDGTHIAETLKVVDPETTLFLIASKTFTTAETITNANTAKNWFLSKTGNDPSHIAKHFAALSTNETEVAKFGIDTKNMFGFESWVGGRYSVWSAIGLSVALYIGYDNFEAFLKGAEAVDNHFTQTPLEDNIPLLGGLLSVWYNNFFGAQTHLVAPFDQYLHRFPAYLQQLSMESNGKSVTRGNVFTDYSTGSILFGEPATNAQHSFFQLVHQGTKLIPSDFILAAQSHNPIENKLHQKMLASNFFAQAEALMVGKDEEQVKAEGATGGLVPHKVFSGNRPTTSILAQKITPATLGALIAYYEHVTFTEGAIWNINSFDQWGVELGKVLAKVIGKELDNSSTISTHDASTNGLINQFKEWM.

Ser2 is modified (N-acetylserine). Thr53 is subject to Phosphothreonine. D-glucose 6-phosphate is bound by residues 168-169 (GS), 218-223 (SKTFTT), Gln363, Glu367, His398, and Lys520. At Thr220 the chain carries Phosphothreonine. Residue Glu367 is the Proton donor of the active site. Residues His398 and Lys520 contribute to the active site.

It belongs to the GPI family. In terms of assembly, homodimer.

Its subcellular location is the cytoplasm. The protein resides in the cytosol. The enzyme catalyses alpha-D-glucose 6-phosphate = beta-D-fructose 6-phosphate. Its pathway is carbohydrate degradation; glycolysis; D-glyceraldehyde 3-phosphate and glycerone phosphate from D-glucose: step 2/4. Its activity is regulated as follows. Strongly inhibited by the polyol (sugar alcohol) phosphate D-glucitol 6-phosphate (D-sorbitol 6-phosphate). Also inhibited by the polyol (sugar alcohol) phosphate D-ribitol 5-phosphate. Functionally, in the cytoplasm, catalyzes the conversion of glucose-6-phosphate to fructose-6-phosphate, the second step in glycolysis, and the reverse reaction during gluconeogenesis. The protein is Glucose-6-phosphate isomerase (PGI1) of Saccharomyces cerevisiae (strain ATCC 204508 / S288c) (Baker's yeast).